Here is a 623-residue protein sequence, read N- to C-terminus: Leucine-rich repeat, immunoglobulin-like domain and transmembrane domain-containing protein 1 (623 aa).

An N-terminal signal peptide occupies residues 1-21 (MWVALGMLWLLALGGPHQAWS). One can recognise an LRRNT domain in the interval 22–59 (FCPSQCSCSLHILSDGSKARTVVCSDPDLTLPPASIPP). Residues 22 to 526 (FCPSQCSCSL…EVVDAEGTQR (505 aa)) are Lumenal-facing. 5 LRR repeats span residues 60–81 (DTCK…TFRP), 84–105 (RLEQ…MLRG), 108–128 (RLRE…AALK), 132–153 (QLQL…AVHF), and 156–177 (NLTF…LLDT). N156 carries an N-linked (GlcNAc...) asparagine glycan. The 53-residue stretch at 201 to 253 (NPWVCDCRLYDLVHLLDGWASNLIFIEARLRCGSPRSLAGVAFSQLELRKCQS) folds into the LRRCT domain. The Ig-like C2-type domain maps to 266–332 (PLGSTVLLRC…SGDYICQAKN (67 aa)). The cysteines at positions 275 and 328 are disulfide-linked. N-linked (GlcNAc...) asparagine glycosylation is found at N296 and N455. Positions 430–518 (MVRSLKVVGD…QCVIFSTDEV (89 aa)) constitute a Fibronectin type-III domain. One copy of the LRR 6 repeat lies at 525–548 (QRLINMVVISVAAIIALPPTLLVC). Residues 527-547 (LINMVVISVAAIIALPPTLLV) form a helical membrane-spanning segment. The Cytoplasmic segment spans residues 548-623 (CCGALRRRCH…GGRRINEYFC (76 aa)).

As to quaternary structure, homodimer. Interacts with LRIT2; may form a heterodimer with LRIT2. Interacts (via its N-terminal extracellular domain) with metabotropic glutamate receptor GRM6. Interacts (via its extreme C-terminus) with the scaffold protein FRMPD2 (via the third PDZ domain); the interaction leads to their colocalization in photoreceptor synapses. In terms of tissue distribution, retina, outer segments of photoreceptor cells.

It localises to the endoplasmic reticulum membrane. The protein localises to the cell projection. The protein resides in the dendrite. Functionally, photoreceptor synaptic protein essential for normal vision. Involved in synapse formation in cone photoreceptor cells. In Rattus norvegicus (Rat), this protein is Leucine-rich repeat, immunoglobulin-like domain and transmembrane domain-containing protein 1 (Lrit1).